We begin with the raw amino-acid sequence, 63 residues long: Keratin-associated protein 19-8 (63 aa).

It belongs to the KRTAP type 19 family. As to quaternary structure, interacts with hair keratins.

In the hair cortex, hair keratin intermediate filaments are embedded in an interfilamentous matrix, consisting of hair keratin-associated proteins (KRTAP), which are essential for the formation of a rigid and resistant hair shaft through their extensive disulfide bond cross-linking with abundant cysteine residues of hair keratins. The matrix proteins include the high-sulfur and high-glycine-tyrosine keratins. The chain is Keratin-associated protein 19-8 (KRTAP19-8) from Homo sapiens (Human).